Consider the following 338-residue polypeptide: tRNA N6-adenosine threonylcarbamoyltransferase (338 aa).

Fe cation-binding residues include H110 and H114. Substrate contacts are provided by residues 132-136, D165, G178, and N274; that span reads VLSGG. Position 298 (D298) interacts with Fe cation.

The protein belongs to the KAE1 / TsaD family. Fe(2+) serves as cofactor.

The protein localises to the cytoplasm. The catalysed reaction is L-threonylcarbamoyladenylate + adenosine(37) in tRNA = N(6)-L-threonylcarbamoyladenosine(37) in tRNA + AMP + H(+). Required for the formation of a threonylcarbamoyl group on adenosine at position 37 (t(6)A37) in tRNAs that read codons beginning with adenine. Is involved in the transfer of the threonylcarbamoyl moiety of threonylcarbamoyl-AMP (TC-AMP) to the N6 group of A37, together with TsaE and TsaB. TsaD likely plays a direct catalytic role in this reaction. This is tRNA N6-adenosine threonylcarbamoyltransferase from Borrelia duttonii (strain Ly).